We begin with the raw amino-acid sequence, 329 residues long: Quinone oxidoreductase (329 aa).

Alanine 2 is modified (N-acetylalanine). The residue at position 23 (lysine 23) is an N6-acetyllysine. Residues tyrosine 53, 158 to 161, glycine 181, histidine 200, asparagine 229, 246 to 249, and 269 to 271 contribute to the NADP(+) site; these read SGGV, VGCR, and VSL. At lysine 296 the chain carries N6-succinyllysine.

Belongs to the zinc-containing alcohol dehydrogenase family. Quinone oxidoreductase subfamily. In terms of assembly, homotetramer.

It localises to the cytoplasm. The enzyme catalyses 2 a quinone + NADPH + H(+) = 2 a 1,4-benzosemiquinone + NADP(+). Functionally, does not have alcohol dehydrogenase activity. Binds NADP and acts through a one-electron transfer process. Orthoquinones, such as 1,2-naphthoquinone or 9,10-phenanthrenequinone, are the best substrates (in vitro). May act in the detoxification of xenobiotics. Interacts with (AU)-rich elements (ARE) in the 3'-UTR of target mRNA species and enhances their stability. NADPH binding interferes with mRNA binding. This chain is Quinone oxidoreductase (Cryz), found in Rattus norvegicus (Rat).